A 136-amino-acid polypeptide reads, in one-letter code: MALLRGFLVCSLLLLSCICKEALGTRLLGGLENASPEEPGVARALQFAMNEYNRGSNDMYSSRVSEVVEAQKQIVSGIKYYFTVKIGRTVCRKGATDLENCAFHNAPKLAQTMTCTFEVYNIPWRNFISLEKSSCT.

A signal peptide spans 1–24 (MALLRGFLVCSLLLLSCICKEALG). In terms of domain architecture, Cystatin spans 29 to 124 (GGLENASPEE…CTFEVYNIPW (96 aa)). The Secondary area of contact signature appears at 73-77 (QIVSG). Disulfide bonds link Cys-91/Cys-101 and Cys-115/Cys-135.

Belongs to the cystatin family. Expressed by the venom gland.

The protein resides in the secreted. Inhibits various C1 cysteine proteases including cathepsin L, papain and cathepsin B. This protein has no toxic activity and its function in the venom is unknown. It may play a role as housekeeping or regulatory protein. The polypeptide is Cystatin-2 (Crotalus adamanteus (Eastern diamondback rattlesnake)).